Reading from the N-terminus, the 644-residue chain is uncharacterized protein (644 aa).

Residue glycine 254–serine 261 coordinates ATP.

This is an uncharacterized protein from Bacillus anthracis.